Consider the following 258-residue polypeptide: Axonemal dynein light intermediate polypeptide 1 (258 aa).

2 disordered regions span residues M1 to D60 and D202 to K231. A coiled-coil region spans residues M176–A255.

Belongs to the inner dynein arm light chain family. Interacts with CFAP45. Interacts with DYNC1H1. Predominantly expressed in the testis, also detected at lower levels in several tissues expressing cilia. Strongly expressed in elongating spermatid cells (at protein level).

Its subcellular location is the cell projection. The protein localises to the cilium. It localises to the flagellum. The protein resides in the dynein axonemal particle. It is found in the cytoplasm. Its function is as follows. Involved in sperm flagellum assembly. This Mus musculus (Mouse) protein is Axonemal dynein light intermediate polypeptide 1.